The chain runs to 292 residues: Ribosomal RNA small subunit methyltransferase A (292 aa).

6 residues coordinate S-adenosyl-L-methionine: Asn28, Leu30, Gly55, Glu76, Asp101, and Asn126.

The protein belongs to the class I-like SAM-binding methyltransferase superfamily. rRNA adenine N(6)-methyltransferase family. RsmA subfamily.

Its subcellular location is the cytoplasm. It carries out the reaction adenosine(1518)/adenosine(1519) in 16S rRNA + 4 S-adenosyl-L-methionine = N(6)-dimethyladenosine(1518)/N(6)-dimethyladenosine(1519) in 16S rRNA + 4 S-adenosyl-L-homocysteine + 4 H(+). Functionally, specifically dimethylates two adjacent adenosines (A1518 and A1519) in the loop of a conserved hairpin near the 3'-end of 16S rRNA in the 30S particle. May play a critical role in biogenesis of 30S subunits. The chain is Ribosomal RNA small subunit methyltransferase A from Bacillus cereus (strain G9842).